A 27-amino-acid polypeptide reads, in one-letter code: Cruzioseptin-14 (27 aa).

As to expression, expressed by the skin glands.

Its subcellular location is the secreted. Has antimicrobial activity. The protein is Cruzioseptin-14 of Cruziohyla calcarifer (Splendid leaf frog).